Consider the following 856-residue polypeptide: Increased rDNA silencing protein 4 (856 aa).

Disordered stretches follow at residues 1–204, 230–563, and 589–672; these read MSAS…EPKS, KQEE…PTPE, and TSLE…DEDL. Low complexity-rich tracts occupy residues 12–42, 67–84, and 111–130; these read GPAS…ATLA, VPTP…RTVG, and SRVV…AGRT. Residues 152–162 show a composition bias toward basic and acidic residues; that stretch reads HVEERANDHAP. The segment covering 194-204 has biased composition (low complexity); the sequence is ASAKPSSEPKS. The segment covering 239–254 has biased composition (basic residues); that stretch reads KKKKKKKPRPASKTQH. Polar residues-rich tracts occupy residues 255-275 and 303-315; these read HQTL…ENQC and SLST…SSTG. A compositionally biased stretch (basic and acidic residues) spans 329 to 347; it reads GETRNRNGDVRDKPSREGG. Composition is skewed to polar residues over residues 396 to 410, 451 to 468, and 478 to 488; these read PVSQ…TIIS, RVVS…QSAE, and RNSTSSDETFV. Over residues 503–514 the composition is skewed to basic and acidic residues; the sequence is KELERVRPRLDR. A compositionally biased stretch (low complexity) spans 517–535; sequence TSTSSRASRVSTPASVRSP. Over residues 603–620 the composition is skewed to basic residues; it reads RRGHRHHHLPHPHLRHRT. The span at 644-654 shows a compositional bias: polar residues; it reads PSRQTEHTQPA. The EH domain maps to 743 to 832; sequence DSLGQVDLSR…EGVWESAMDR (90 aa).

The protein belongs to the IRS4 family.

In terms of biological role, positive regulator of phosphatidylinositol 4,5-bisphosphate turnover and negatively regulates signaling through the cell integrity pathway. Involved in rDNA silencing. The sequence is that of Increased rDNA silencing protein 4 (irs-4) from Neurospora crassa (strain ATCC 24698 / 74-OR23-1A / CBS 708.71 / DSM 1257 / FGSC 987).